A 370-amino-acid chain; its full sequence is L-lysine 4-hydroxylase (370 aa).

Residues H176, E178, and H310 each coordinate Fe cation.

This sequence belongs to the clavaminate synthase family. Fe(2+) is required as a cofactor.

The catalysed reaction is L-lysine + 2-oxoglutarate + O2 = (4R)-4-hydroxy-L-lysine + succinate + CO2. Alpha-ketoglutarate-dependent dioxygenase that in vitro catalyzes the regio- and stereoselective hydroxylation of L-lysine, leading to (4R)-4-hydroxy-L-lysine. To a lesser extent, can also use (3S)-3-hydroxy-L-lysine as substrate, producing the dihydroxylated product (3R,4R)-3,4-hydroxy-L-lysine. Cannot use D-lysine or L-ornithine as substrate. In Flavobacterium johnsoniae (strain ATCC 17061 / DSM 2064 / JCM 8514 / BCRC 14874 / CCUG 350202 / NBRC 14942 / NCIMB 11054 / UW101) (Cytophaga johnsonae), this protein is L-lysine 4-hydroxylase.